A 48-amino-acid chain; its full sequence is Large ribosomal subunit protein uL14 (48 aa).

It belongs to the universal ribosomal protein uL14 family.

This chain is Large ribosomal subunit protein uL14 (RPL23), found in Onchocerca volvulus.